We begin with the raw amino-acid sequence, 299 residues long: Non-structural protein V (299 aa).

Residues 41-99 are disordered; the sequence is DNPGQERATCREEKAGSSGLSKPCLSAIGSTEGGAPRIRGQGPGESDDDAETLGIPPRN. Residues 110–120 are interaction with host STAT1; that stretch reads YYVYDHSGEAV. Residues 134–145 are compositionally biased toward low complexity; the sequence is GLDGDSTLSGGD. A disordered region spans residues 134 to 162; that stretch reads GLDGDSTLSGGDNESENSDVDIGEPDTEG. The segment covering 146–160 has biased composition (acidic residues); that stretch reads NESENSDVDIGEPDT. 8 residues coordinate Zn(2+): His-232, Cys-251, Cys-255, Cys-267, Cys-269, Cys-272, Cys-276, and Cys-279.

It belongs to the paramyxoviruses V protein family. As to quaternary structure, interacts with host IFIH1/MDA5 and DHX58/LGP2; these interactions are involved in the inhibition of the host type I interferon signaling pathway. Interacts with host TYK2; this interaction inhibits the type I interferon signaling pathway without affecting the type II pathway. Interacts with host IRF7; this interaction inhibits IRF7 translocation to the nucleus. Interacts with host CHUK. Interacts with host RELA/p65; this interaction inhibits the nuclear translocation of NF-KappaB. Interacts (via N-terminus) with host STAT1 and JAK1; these interactions inhibit STAT1 phosphorylation by Jak1 and thereby the type I interferon signaling pathway. Interacts (via C-terminus) with host STAT2; this interaction is involved in the inhibition of the host type I interferon signaling pathway. Forms a complex with host PPP1CA and PPP1CC; this interaction prevents dephosphorylation of host IFIH1/MDA5 and leads to the inhibition of the host type I interferon signaling pathway. Interacts with host IRF9; this interaction prevents the binding of IRF9 to STAT2 and thereby the type I interferon signaling pathway.

Its subcellular location is the host cytoplasm. Plays an essential role in the inhibition of host immune response. Prevents the establishment of cellular antiviral state by blocking interferon-alpha/beta (IFN-alpha/beta) production and signaling pathway. Interacts with host IFIH1/MDA5 and DHX58/LGP2 to inhibit the transduction pathway involved in the activation of IFN-beta promoter, thus protecting the virus against cell antiviral state. Blocks the type I interferon signaling pathway by interacting with host TYK2 and thereby inhibiting downstream STAT1 and STAT2 phosphorylation. Moderately affects the type II interferon signaling. The polypeptide is Non-structural protein V (P/V) (Measles virus (strain Edmonston-Schwarz vaccine) (MeV)).